Reading from the N-terminus, the 117-residue chain is Urease subunit beta (117 aa).

Residues 95 to 117 form a disordered region; that stretch reads NAVNGKLDGGPHPGVPATERGAK.

This sequence belongs to the urease beta subunit family. In terms of assembly, heterotrimer of UreA (gamma), UreB (beta) and UreC (alpha) subunits. Three heterotrimers associate to form the active enzyme.

Its subcellular location is the cytoplasm. It catalyses the reaction urea + 2 H2O + H(+) = hydrogencarbonate + 2 NH4(+). It functions in the pathway nitrogen metabolism; urea degradation; CO(2) and NH(3) from urea (urease route): step 1/1. The protein is Urease subunit beta of Pseudarthrobacter chlorophenolicus (strain ATCC 700700 / DSM 12829 / CIP 107037 / JCM 12360 / KCTC 9906 / NCIMB 13794 / A6) (Arthrobacter chlorophenolicus).